A 156-amino-acid chain; its full sequence is uncharacterized protein (156 aa).

The segment covering 1 to 12 has biased composition (pro residues); sequence MSARPSLPPLPA. Disordered stretches follow at residues 1–89 and 129–156; these read MSAR…PPPA and PLSP…TMRD. Positions 49 to 67 are enriched in basic and acidic residues; it reads ARAEEAGGEEGKREAEAWT.

This is an uncharacterized protein from Homo sapiens (Human).